Here is a 689-residue protein sequence, read N- to C-terminus: MVLKEPPAERIQQLRRLLQRASYAYYALDQPIMEDEVYDQLYRELQELEAAYPEYITPDSPTQRIGEAPVSQFESVSHRIPLYSLENAFTFADMVAWQERWQRYWRTLRQEEPLPPAEYVCELKMDGVALALTYENGLLVRGATRGDGQRGEDVTSNVRTIRPIPLRLALDNPPPVVEVRGEAFLPLERFHQLNQERQAQGEPPFANPRNAAAGTLRQLDPRIVAQRQLDFFAYALHLPEGGSVPLGENQAGEPQSQRQVLYALQHLGFRVNPHHADCPDLEAVKAYYDRWQTARHQLPYLTDGIVVKLNDLKLQQTLGFTQKFPRGSIAWKYEPEQAITDVLAITVQVGRTGALTPVAELAPVQLAGTTVSRATLHNADYIAELDLHIGDKVVIHKAGEIIPEIVRVFPELRPPTARPFTMPTACPECHQPVVRPANEAVSRCGNPRCPAIVRGQIRHWASRDALDIQGLGEKLVQQLVTKELVRTPADLYRLTAAQLLSLERMGQKSADKLLVAIANSKQQPWPRVLYGLGIRHVGSVNAQLLADRFKSVEELATATVADLCGVDGIGEEIAQAVQEWFQDPDHQSLIADLQALGLQLAAALHPAQKALTTEKSLNGKRFVITGTLPTLTREQAKALIQKHGGHVSESVSRQTDYLVVGEKAGSKLRRAQELGIPCINETELIQMCR.

Residues 35 to 39 (DEVYD), 84 to 85 (SL), and Glu122 each bind NAD(+). Lys124 functions as the N6-AMP-lysine intermediate in the catalytic mechanism. NAD(+) contacts are provided by Arg145, Glu182, Lys308, and Lys332. Residues Cys426, Cys429, Cys444, and Cys449 each contribute to the Zn(2+) site. Residues 612-689 (TTEKSLNGKR…NETELIQMCR (78 aa)) form the BRCT domain.

Belongs to the NAD-dependent DNA ligase family. LigA subfamily. The cofactor is Mg(2+). It depends on Mn(2+) as a cofactor.

It carries out the reaction NAD(+) + (deoxyribonucleotide)n-3'-hydroxyl + 5'-phospho-(deoxyribonucleotide)m = (deoxyribonucleotide)n+m + AMP + beta-nicotinamide D-nucleotide.. In terms of biological role, DNA ligase that catalyzes the formation of phosphodiester linkages between 5'-phosphoryl and 3'-hydroxyl groups in double-stranded DNA using NAD as a coenzyme and as the energy source for the reaction. It is essential for DNA replication and repair of damaged DNA. The sequence is that of DNA ligase from Thermosynechococcus vestitus (strain NIES-2133 / IAM M-273 / BP-1).